The chain runs to 199 residues: DnaJ homolog subfamily C member 5B (199 aa).

Position 14 is a phosphoserine (serine 14). In terms of domain architecture, J spans 19–84 (ALYEILGLHK…SKRSIYDKYG (66 aa)).

In terms of assembly, interacts with the chaperone complex consisting of HSC70 and SGTA. Post-translationally, palmitoylated. Palmitoylation is not required for membrane association. Testis specific.

Its subcellular location is the membrane. In Homo sapiens (Human), this protein is DnaJ homolog subfamily C member 5B (DNAJC5B).